The sequence spans 122 residues: UPF0231 protein VP2494 (122 aa).

It belongs to the UPF0231 family.

The polypeptide is UPF0231 protein VP2494 (Vibrio parahaemolyticus serotype O3:K6 (strain RIMD 2210633)).